The sequence spans 413 residues: Serine/threonine-protein phosphatase 7 (413 aa).

Cys28 and Cys67 are oxidised to a cystine. Positions 84, 86, 113, and 145 each coordinate Mn(2+). His146 functions as the Proton donor in the catalytic mechanism. Residues His197 and His303 each contribute to the Mn(2+) site. The tract at residues 391-413 (NVIDSDDEMDKSAMDTNNEQPNS) is disordered. The segment covering 404 to 413 (MDTNNEQPNS) has biased composition (polar residues).

It belongs to the PPP phosphatase family. PP-7 subfamily. As to quaternary structure, monomer, homodimer, and heteromer. Interacts with calmodulin (CaM3 and CaM4) and HSFA1A/HSF1. Requires Mn(2+) as cofactor. In terms of tissue distribution, expressed in leaves, and, to a lower extent, in stems and flowers.

Its subcellular location is the nucleus. The protein localises to the nucleoplasm. The enzyme catalyses O-phospho-L-seryl-[protein] + H2O = L-seryl-[protein] + phosphate. It carries out the reaction O-phospho-L-threonyl-[protein] + H2O = L-threonyl-[protein] + phosphate. Inhibited by NaF and orthovanadate, as well as by divalent cations such as Ni(2+) and Zn(2+). Inhibited by polylysine with myelin basic protein as substrate, but activated by polylysine with pNPP as substrate. Reversibly regulated by redox agents. Inhibited by submillimolar Pi concentrations. Slightly repressed by calmodulin (CaM). Phosphatase active on para-nitrophenylphosphate (pNPP) and on various phosphoproteins such as myelin basic protein. Seems to act as a positive regulator of cryptochrome signaling involved in hypocotyl growth inhibition and cotyledon expansion under white and blue light conditions. Confers thermotolerance. Required for heat shock mediated-signaling pathway that leads to the expression of heat shock proteins (HSPs). In Arabidopsis thaliana (Mouse-ear cress), this protein is Serine/threonine-protein phosphatase 7 (PP7).